Here is a 351-residue protein sequence, read N- to C-terminus: Photosystem II D2 protein (351 aa).

A helical transmembrane segment spans residues 39 to 59 (TAYLAVGGWMTGTTFVTSWYT). His116 is a chlorophyll a binding site. The chain crosses the membrane as a helical span at residues 123–139 (GFCLRQFEIARLVGIRP). Positions 128 and 141 each coordinate pheophytin a. A helical membrane pass occupies residues 151–164 (VFVSVFLLYPLGQA). Residue His196 coordinates chlorophyll a. Residues 206–226 (GALLCAIHGATVENTLFEDGD) traverse the membrane as a helical segment. Residues His213 and Phe260 each contribute to the a plastoquinone site. A Fe cation-binding site is contributed by His213. His267 lines the Fe cation pocket. A helical membrane pass occupies residues 277 to 293 (GLWTSAIGIVGLALNLR).

This sequence belongs to the reaction center PufL/M/PsbA/D family. As to quaternary structure, PSII is composed of 1 copy each of membrane proteins PsbA, PsbB, PsbC, PsbD, PsbE, PsbF, PsbH, PsbI, PsbJ, PsbK, PsbL, PsbM, PsbT, PsbX, PsbY, PsbZ, Psb30/Ycf12, at least 3 peripheral proteins of the oxygen-evolving complex and a large number of cofactors. It forms dimeric complexes. It depends on The D1/D2 heterodimer binds P680, chlorophylls that are the primary electron donor of PSII, and subsequent electron acceptors. It shares a non-heme iron and each subunit binds pheophytin, quinone, additional chlorophylls, carotenoids and lipids. There is also a Cl(-1) ion associated with D1 and D2, which is required for oxygen evolution. The PSII complex binds additional chlorophylls, carotenoids and specific lipids. as a cofactor.

It localises to the plastid. The protein resides in the chloroplast thylakoid membrane. It catalyses the reaction 2 a plastoquinone + 4 hnu + 2 H2O = 2 a plastoquinol + O2. Photosystem II (PSII) is a light-driven water:plastoquinone oxidoreductase that uses light energy to abstract electrons from H(2)O, generating O(2) and a proton gradient subsequently used for ATP formation. It consists of a core antenna complex that captures photons, and an electron transfer chain that converts photonic excitation into a charge separation. The D1/D2 (PsbA/PsbD) reaction center heterodimer binds P680, the primary electron donor of PSII as well as several subsequent electron acceptors. D2 is needed for assembly of a stable PSII complex. This Phaeodactylum tricornutum (strain CCAP 1055/1) protein is Photosystem II D2 protein.